Consider the following 215-residue polypeptide: High mobility group protein B1 (215 aa).

Residues 9 to 79 constitute a DNA-binding region (HMG box 1); that stretch reads PRGKMSSYAF…RYEKEMKNYV (71 aa). A Cysteine sulfonic acid (-SO3H); alternate modification is found at C23. A disulfide bond links C23 and C45. The tract at residues 27–43 is NLS 1; it reads HKKKHPDASVNFSEFSK. Residues 27-43 carry the Nuclear localization signal (NLS) 1 motif; sequence HKKKHPDASVNFSEFSK. C45 is modified (cysteine sulfonic acid (-SO3H); alternate). Positions 75-95 are disordered; sequence MKNYVPPKGETKKKFKDPNAP. Basic and acidic residues predominate over residues 83–94; sequence GETKKKFKDPNA. Positions 95–163 form a DNA-binding region, HMG box 2; it reads PKRPPSAFFL…KYEKDIAAYR (69 aa). C106 bears the Cysteine sulfonic acid (-SO3H) mark. Over residues 166–179 the composition is skewed to basic and acidic residues; sequence GKVDAGKKVVAKAE. Residues 166–215 form a disordered region; the sequence is GKVDAGKKVVAKAEKSKKKKEEEEDEDEDEEDEEDEEEEEEEEEDDDDDE. The NLS 2 stretch occupies residues 178–184; sequence AEKSKKK. The Nuclear localization signal (NLS) 2 motif lies at 178 to 184; that stretch reads AEKSKKK. Residues 187–215 are compositionally biased toward acidic residues; it reads EEEDEDEDEEDEEDEEEEEEEEEDDDDDE. The involved in intramolecular interaction with K-3 stretch occupies residues 196–210; that stretch reads EDEEDEEEEEEEEED. The tract at residues 211–215 is involved in interaction with histone H3; the sequence is DDDDE.

It belongs to the HMGB family. In terms of processing, reduction/oxidation of cysteine residues Cys-23, Cys-45 and Cys-106 and a possible intramolecular disulfide bond involving Cys-23 and Cys-45 give rise to different redox forms with specific functional activities: 1- fully reduced HMGB1 (HMGB1C23hC45hC106h), 2- disulfide HMGB1 (HMGB1C23-C45C106h) and 3- sulfonyl HMGB1 (HMGB1C23soC45soC106so).

The protein localises to the nucleus. The protein resides in the chromosome. It is found in the cytoplasm. It localises to the secreted. Its function is as follows. Multifunctional redox sensitive protein with various roles in different cellular compartments. Nuclear functions are attributed to fully reduced HGMB1. Associates with chromatin and binds DNA with a preference to non-canonical DNA structures such as single-stranded DNA, DNA-containing cruciforms or bent structures, supercoiled DNA and ZDNA. Can bent DNA and enhance DNA flexibility by looping thus providing a mechanism to promote activities on various gene promoters. Can restructure the canonical nucleosome. Proposed to be an universal biosensor for nucleic acids. May promote inflammatory response to sterile and infectious signals and may be involved in the coordination and integration of innate and adaptive immune responses. In the cytoplasm may function as sensor and/or chaperone for immunogenic nucleic acids, and mediate autophagy. May act as danger associated molecular pattern (DAMP) molecule that amplifies immune responses during tissue injury. In Gallus gallus (Chicken), this protein is High mobility group protein B1 (HMGB1).